We begin with the raw amino-acid sequence, 130 residues long: Small ribosomal subunit protein uS9 (130 aa).

It belongs to the universal ribosomal protein uS9 family.

This chain is Small ribosomal subunit protein uS9, found in Oceanobacillus iheyensis (strain DSM 14371 / CIP 107618 / JCM 11309 / KCTC 3954 / HTE831).